The following is a 99-amino-acid chain: Teretoxin Tsu6.4 (99 aa).

The N-terminal stretch at 1–21 (MRLLLILVLLTPVIVAFSVDE) is a signal peptide. The propeptide occupies 22 to 53 (ELNNADGANAASFTADQEVRHKRNLFPAIARR).

Post-translationally, contains 3 disulfide bonds. Expressed by the venom duct.

The protein resides in the secreted. The chain is Teretoxin Tsu6.4 from Terebra subulata (Chocolate spotted auger).